Consider the following 235-residue polypeptide: tRNA (guanine-N(1)-)-methyltransferase (235 aa).

Residues Gly112 and 132-137 (IGDYVI) contribute to the S-adenosyl-L-methionine site.

It belongs to the RNA methyltransferase TrmD family. Homodimer.

The protein localises to the cytoplasm. The catalysed reaction is guanosine(37) in tRNA + S-adenosyl-L-methionine = N(1)-methylguanosine(37) in tRNA + S-adenosyl-L-homocysteine + H(+). Its function is as follows. Specifically methylates guanosine-37 in various tRNAs. In Anaplasma marginale (strain St. Maries), this protein is tRNA (guanine-N(1)-)-methyltransferase.